The primary structure comprises 289 residues: MLHIKCKDTDLDPIPVKIGIIGGSGLDDPDILENRQEKVISTPYGEPSDALIQGEIGGVQCVLLARHGRKHDIMPSNVNYRANIWALRDVGCTHLIVSTACGSLREQIKPGNLVMPHDFIDRTTKRSQTFYDGSATSPRGVCHLPMYPAFSERTRNILIEAAKELEIPAHEKATIVTIEGPRFSSRSESLMFREWGGDLINMTTCPEVVLAKEAGLLYGSVAIATDYDCWRMGCEGVNVQDVLKTFAENVIKVKKILVNAVGRIAKEDWSEDILNAKQCVCNNTMSGAM.

Phosphate-binding positions include Ser24, Arg66–His67, and Thr99–Ala100. Residue Met202 coordinates substrate. A phosphate-binding site is contributed by Thr203. Asp226–Asp228 provides a ligand contact to substrate.

The protein belongs to the PNP/MTAP phosphorylase family. MTAP subfamily. Homotrimer.

It is found in the cytoplasm. The protein resides in the nucleus. It catalyses the reaction S-methyl-5'-thioadenosine + phosphate = 5-(methylsulfanyl)-alpha-D-ribose 1-phosphate + adenine. Its pathway is amino-acid biosynthesis; L-methionine biosynthesis via salvage pathway; S-methyl-5-thio-alpha-D-ribose 1-phosphate from S-methyl-5'-thioadenosine (phosphorylase route): step 1/1. In terms of biological role, catalyzes the reversible phosphorylation of S-methyl-5'-thioadenosine (MTA) to adenine and 5-methylthioribose-1-phosphate. Involved in the breakdown of MTA, a major by-product of polyamine biosynthesis. Responsible for the first step in the methionine salvage pathway after MTA has been generated from S-adenosylmethionine. Has broad substrate specificity with 6-aminopurine nucleosides as preferred substrates. The polypeptide is S-methyl-5'-thioadenosine phosphorylase (Drosophila pseudoobscura pseudoobscura (Fruit fly)).